The following is a 416-amino-acid chain: NADH-quinone oxidoreductase subunit H (416 aa).

The next 9 membrane-spanning stretches (helical) occupy residues 16–36, 84–104, 124–144, 165–185, 197–217, 260–280, 288–308, 320–340, and 353–373; these read LILA…LAAI, PVYL…FAVI, LAVA…GIVL, VVSY…YAGT, STWY…SMVG, VSAL…PISL, WWPL…YIWL, FMAI…MIVA, and WASG…VVLW.

The protein belongs to the complex I subunit 1 family. NDH-1 is composed of 14 different subunits. Subunits NuoA, H, J, K, L, M, N constitute the membrane sector of the complex.

It localises to the cell membrane. The catalysed reaction is a quinone + NADH + 5 H(+)(in) = a quinol + NAD(+) + 4 H(+)(out). NDH-1 shuttles electrons from NADH, via FMN and iron-sulfur (Fe-S) centers, to quinones in the respiratory chain. The immediate electron acceptor for the enzyme in this species is believed to be menaquinone. Couples the redox reaction to proton translocation (for every two electrons transferred, four hydrogen ions are translocated across the cytoplasmic membrane), and thus conserves the redox energy in a proton gradient. This subunit may bind ubiquinone. The sequence is that of NADH-quinone oxidoreductase subunit H from Mycobacterium sp. (strain JLS).